We begin with the raw amino-acid sequence, 194 residues long: Lysozyme g (194 aa).

Active-site residues include Glu71 and Asp84.

Belongs to the glycosyl hydrolase 23 family. In terms of tissue distribution, expressed in intestine, liver, spleen, anterior kidney, posterior kidney, heart, gill, muscle and leukocytes.

The enzyme catalyses Hydrolysis of (1-&gt;4)-beta-linkages between N-acetylmuramic acid and N-acetyl-D-glucosamine residues in a peptidoglycan and between N-acetyl-D-glucosamine residues in chitodextrins.. Its function is as follows. Has lytic activity against M.lysodeikticus, V.alginolyticus from Epinephelus fario, V.vulnificus from culture water, A.hydrophila from soft-shell turtle, A.hydrophila from goldfish and V.parahaemolyticus, P.fluorescens and V.fluvialis from culture water. The polypeptide is Lysozyme g (Epinephelus coioides (Orange-spotted grouper)).